The primary structure comprises 624 residues: Chaperone protein HtpG (624 aa).

Residues 1–336 (MKTQKKEVYN…SSDLPLNISR (336 aa)) are a; substrate-binding. Residues 337 to 552 (EILQDNSITE…STEMTTQMAK (216 aa)) form a b region. The interval 553-624 (LFSAAGQSVP…ISRMNKLLIK (72 aa)) is c.

It belongs to the heat shock protein 90 family. As to quaternary structure, homodimer.

Its subcellular location is the cytoplasm. In terms of biological role, molecular chaperone. Has ATPase activity. In Buchnera aphidicola subsp. Acyrthosiphon pisum (strain APS) (Acyrthosiphon pisum symbiotic bacterium), this protein is Chaperone protein HtpG.